A 64-amino-acid polypeptide reads, in one-letter code: Large ribosomal subunit protein bL35 (64 aa).

The span at 1–28 (MPKMKTKSGAAKRFKKTAGGLKHKHAFK) shows a compositional bias: basic residues. The segment at 1-64 (MPKMKTKSGA…ARVERSLRLR (64 aa)) is disordered. The segment covering 53 to 64 (DVARVERSLRLR) has biased composition (basic and acidic residues).

The protein belongs to the bacterial ribosomal protein bL35 family.

The polypeptide is Large ribosomal subunit protein bL35 (Pseudomonas aeruginosa (strain LESB58)).